Consider the following 181-residue polypeptide: Protein Syd (181 aa).

The protein belongs to the Syd family.

Its subcellular location is the cell inner membrane. Functionally, interacts with the SecY protein in vivo. May bind preferentially to an uncomplexed state of SecY, thus functioning either as a chelating agent for excess SecY in the cell or as a regulatory factor that negatively controls the translocase function. The protein is Protein Syd of Escherichia coli O157:H7.